Here is a 109-residue protein sequence, read N- to C-terminus: Elongation factor G, chloroplastic (109 aa).

The protein belongs to the GTP-binding elongation factor family. EF-G/EF-2 subfamily.

The protein resides in the plastid. Its subcellular location is the chloroplast. It participates in protein biosynthesis; polypeptide chain elongation. In terms of biological role, chloroplast-localized elongation factor EF-G involved in protein synthesis in plastids. Catalyzes the GTP-dependent ribosomal translocation step during translation elongation. During this step, the ribosome changes from the pre-translocational (PRE) to the post-translocational (POST) state as the newly formed A-site-bound peptidyl-tRNA and P-site-bound deacylated tRNA move to the P and E sites, respectively. Catalyzes the coordinated movement of the two tRNA molecules, the mRNA and conformational changes in the ribosome. This chain is Elongation factor G, chloroplastic, found in Arachis hypogaea (Peanut).